Reading from the N-terminus, the 159-residue chain is Cyclic pyranopterin monophosphate synthase (159 aa).

Substrate is bound by residues leucine 75–histidine 77 and methionine 113–glutamate 114. The active site involves aspartate 128.

This sequence belongs to the MoaC family. Homohexamer; trimer of dimers.

It carries out the reaction (8S)-3',8-cyclo-7,8-dihydroguanosine 5'-triphosphate = cyclic pyranopterin phosphate + diphosphate. Its pathway is cofactor biosynthesis; molybdopterin biosynthesis. Catalyzes the conversion of (8S)-3',8-cyclo-7,8-dihydroguanosine 5'-triphosphate to cyclic pyranopterin monophosphate (cPMP). The sequence is that of Cyclic pyranopterin monophosphate synthase from Aliivibrio fischeri (strain MJ11) (Vibrio fischeri).